The primary structure comprises 210 residues: Probable septum site-determining protein MinC (210 aa).

Belongs to the MinC family. In terms of assembly, interacts with MinD and FtsZ.

Its function is as follows. Cell division inhibitor that blocks the formation of polar Z ring septums. Rapidly oscillates between the poles of the cell to destabilize FtsZ filaments that have formed before they mature into polar Z rings. Prevents FtsZ polymerization. The sequence is that of Probable septum site-determining protein MinC from Thermotoga neapolitana (strain ATCC 49049 / DSM 4359 / NBRC 107923 / NS-E).